A 499-amino-acid polypeptide reads, in one-letter code: Guanosine-5'-triphosphate,3'-diphosphate pyrophosphatase (499 aa).

The protein belongs to the GppA/Ppx family. GppA subfamily.

The catalysed reaction is guanosine 3'-diphosphate 5'-triphosphate + H2O = guanosine 3',5'-bis(diphosphate) + phosphate + H(+). The protein operates within purine metabolism; ppGpp biosynthesis; ppGpp from GTP: step 2/2. Functionally, catalyzes the conversion of pppGpp to ppGpp. Guanosine pentaphosphate (pppGpp) is a cytoplasmic signaling molecule which together with ppGpp controls the 'stringent response', an adaptive process that allows bacteria to respond to amino acid starvation, resulting in the coordinated regulation of numerous cellular activities. This is Guanosine-5'-triphosphate,3'-diphosphate pyrophosphatase from Sodalis glossinidius (strain morsitans).